A 107-amino-acid polypeptide reads, in one-letter code: Homeobox protein HD-7 (107 aa).

Residues 21-80 (KPGEKVRKSEFQKEVLKKVYQATPYPTWENKIDIGILISLSPRAVDIWFQNKRHINKGKN) constitute a DNA-binding region (homeobox).

The protein localises to the nucleus. The sequence is that of Homeobox protein HD-7 (HD-7) from Encephalitozoon cuniculi (strain GB-M1) (Microsporidian parasite).